A 550-amino-acid polypeptide reads, in one-letter code: Sterol O-acyltransferase 1 (550 aa).

Methionine 1 carries the post-translational modification N-acetylmethionine. The disordered stretch occupies residues 1-36 (MVGEEKMSLRNRLSKSRENPEEDEDQRKPAKESLEA). Topologically, residues 1–138 (MVGEEKMSLR…LDELLEVDHI (138 aa)) are cytoplasmic. Position 8 is a phosphoserine (serine 8). Residues 15–34 (KSRENPEEDEDQRKPAKESL) show a composition bias toward basic and acidic residues. Histidine 137 is a cholesterol binding site. Residues 139-160 (RTIYHMFIALLILFILSTLVVD) traverse the membrane as a helical segment. At 161–180 (YIDEGRLVLEFSLLSYAFGK) the chain is on the lumenal side. The chain crosses the membrane as a helical span at residues 181 to 206 (FPTVVWTWWIMFLSTFSVPYFLFQRW). Residues 207–218 (ATGYSKSSHPLI) lie on the Cytoplasmic side of the membrane. The chain crosses the membrane as a helical span at residues 219-244 (NSLFHGFLFMVFQIGILGFGPTYVVL). Residues 245 to 252 (AYTLPPAS) are Lumenal-facing. Residues 253 to 276 (RFIIIFEQIRFVMKAHSFVRENVP) traverse the membrane as a helical segment. Residues 277 to 319 (RVLNSAKEKSSTVPIPTVNQYLYFLFAPTLIYRDSYPRNPTVR) are Cytoplasmic-facing. A helical membrane pass occupies residues 320-352 (WGYVAMQFAQVFGCFFYVYYIFERLCAPLFRNI). The Lumenal segment spans residues 353-369 (KQEPFSARVLVLCVFNS). Residues 370–395 (ILPGVLILFLTFFAFLHCWLNAFAEM) traverse the membrane as a helical segment. Topologically, residues 396 to 443 (LRFGDRMFYKDWWNSTSYSNYYRTWNVVVHDWLYYYAYKDFLWFFSKR) are cytoplasmic. Positions 403 to 409 (FYKDWWN) match the FYXDWWN motif motif. Asparagine 415, arginine 418, asparagine 421, histidine 425, tyrosine 433, lysine 445, and serine 456 together coordinate an acyl-CoA. Residues 444–468 (FKSAAMLAAFAVSAVVHEYALAVCL) form a helical membrane-spanning segment. Histidine 460 is an active-site residue. The Lumenal portion of the chain corresponds to 469-474 (SFFYPV). A helical transmembrane segment spans residues 475–490 (LFVLFMFFGMAFNFIV). Residues 491–496 (NDSRKK) are Cytoplasmic-facing. A helical membrane pass occupies residues 497–528 (PIWNVMMWTSLFLGNGVLLCFYSQEWYARQHC). A disulfide bridge links cysteine 528 with cysteine 546. At 529 to 550 (PLKNPTFLDYVRPRSWTCRYVF) the chain is on the lumenal side.

Belongs to the membrane-bound acyltransferase family. Sterol o-acyltransferase subfamily. May form homo- or heterodimers. Interacts with UBIAD1. Expressed in most tissues, but most strongly in the adrenal gland. Expressed more strongly in liver Kupffer cells than in hepatocytes.

It is found in the endoplasmic reticulum membrane. It carries out the reaction a sterol + a long-chain fatty acyl-CoA = a long-chain 3-hydroxysterol ester + CoA. The catalysed reaction is cholesterol + an acyl-CoA = a cholesterol ester + CoA. It catalyses the reaction cholesterol + (9Z)-octadecenoyl-CoA = cholesteryl (9Z-octadecenoate) + CoA. The enzyme catalyses cholesterol + hexadecanoyl-CoA = cholesteryl hexadecanoate + CoA. It carries out the reaction octadecanoyl-CoA + cholesterol = cholesteryl octadecanoate + CoA. The catalysed reaction is (9Z,12Z)-octadecadienoyl-CoA + cholesterol = cholesteryl (9Z,12Z)-octadecadienoate + CoA. It catalyses the reaction (5Z,8Z,11Z,14Z)-eicosatetraenoyl-CoA + cholesterol = cholesteryl (5Z,8Z,11Z,14Z)-eicosatetraenoate + CoA. The enzyme catalyses (9Z)-hexadecenoyl-CoA + cholesterol = cholesteryl (9Z)-hexadecenoate + CoA. It carries out the reaction (11Z)-octadecenoyl-CoA + cholesterol = cholesteryl (11Z)-octadecenoate + CoA. The catalysed reaction is (7Z)-octadecenoyl-CoA + cholesterol = cholesteryl (7Z)-octadecenoate + CoA. Its function is as follows. Catalyzes the formation of fatty acid-cholesterol esters, which are less soluble in membranes than cholesterol. Plays a role in lipoprotein assembly and dietary cholesterol absorption. Preferentially utilizes oleoyl-CoA ((9Z)-octadecenoyl-CoA) as a substrate: shows a higher activity towards an acyl-CoA substrate with a double bond at the delta-9 position (9Z) than towards saturated acyl-CoA or an unsaturated acyl-CoA with a double bond at the delta-7 (7Z) or delta-11 (11Z) positions. This Macaca fascicularis (Crab-eating macaque) protein is Sterol O-acyltransferase 1 (SOAT1).